The primary structure comprises 180 residues: Ribulose bisphosphate carboxylase small subunit, chloroplastic 5 (180 aa).

The transit peptide at 1-56 (MASSVMSSAAVATRGNGAQASMVAPFTGLKSTASFPVSRKQNLDITSIASNGGRVR) directs the protein to the chloroplast.

Belongs to the RuBisCO small chain family. Heterohexadecamer of 8 large and 8 small subunits.

It localises to the plastid. The protein localises to the chloroplast. In terms of biological role, ruBisCO catalyzes two reactions: the carboxylation of D-ribulose 1,5-bisphosphate, the primary event in carbon dioxide fixation, as well as the oxidative fragmentation of the pentose substrate. Both reactions occur simultaneously and in competition at the same active site. Although the small subunit is not catalytic it is essential for maximal activity. The sequence is that of Ribulose bisphosphate carboxylase small subunit, chloroplastic 5 from Solanum tuberosum (Potato).